Reading from the N-terminus, the 1147-residue chain is uncharacterized protein (1147 aa).

Disordered stretches follow at residues 226–245 (FGQG…GQVD), 255–297 (IQGT…QEKA), 431–617 (SQHP…QSCI), 647–670 (EEMD…DPVR), 705–945 (HRHR…RRLQ), 1003–1032 (RQQQ…EAEK), and 1060–1090 (YQRR…RLAQ). A compositionally biased stretch (basic and acidic residues) spans 268–296 (WQKDETQTEDTSKDNHHCIHTSKENHQEK). Basic residues predominate over residues 431 to 441 (SQHPPKGKAQR). Residues 538 to 549 (PAGGALPAAGQA) show a composition bias toward low complexity. Residues 584–603 (LNETSPLTQKPENQGAQQSL) are compositionally biased toward polar residues. The segment covering 743 to 752 (NQKTSNNISN) has biased composition (polar residues). Positions 743–804 (NQKTSNNISN…ESKAEKKSQL (62 aa)) form a coiled coil. Basic and acidic residues predominate over residues 768–802 (TDKSKAPKREKEGKLHEEAEAAVGKSKESKAEKKS). The segment covering 807–819 (KGKKTGAKGKRTR) has biased composition (basic residues). Positions 870-884 (SQVSIDGRSSPTQTA) are enriched in polar residues. Over residues 895 to 945 (DRSHEDPSKAFLVKREQEKASRDRLRAERAEMRRLEVERKRREQEEQRRLQ) the composition is skewed to basic and acidic residues. A coiled-coil region spans residues 907–1112 (VKREQEKASR…QKDALKKHLH (206 aa)).

This is an uncharacterized protein from Bos taurus (Bovine).